Here is a 117-residue protein sequence, read N- to C-terminus: UPF0122 protein TTE1463 (117 aa).

It belongs to the UPF0122 family.

Functionally, might take part in the signal recognition particle (SRP) pathway. This is inferred from the conservation of its genetic proximity to ftsY/ffh. May be a regulatory protein. The protein is UPF0122 protein TTE1463 of Caldanaerobacter subterraneus subsp. tengcongensis (strain DSM 15242 / JCM 11007 / NBRC 100824 / MB4) (Thermoanaerobacter tengcongensis).